A 321-amino-acid chain; its full sequence is 2,3,4,5-tetrahydropyridine-2,6-dicarboxylate N-succinyltransferase (321 aa).

Positions 166 and 183 each coordinate Mg(2+). The active-site Acyl-anhydride intermediate is glutamate 199. Succinyl-CoA-binding positions include arginine 201, glycine 216, serine 219, alanine 242, 257–258, glycine 265, lysine 281, and 294–297; these read EA and RRNS.

The protein belongs to the type 2 tetrahydrodipicolinate N-succinyltransferase family. In terms of assembly, homotrimer.

The protein resides in the cytoplasm. It catalyses the reaction (S)-2,3,4,5-tetrahydrodipicolinate + succinyl-CoA + H2O = (S)-2-succinylamino-6-oxoheptanedioate + CoA. Its pathway is amino-acid biosynthesis; L-lysine biosynthesis via DAP pathway; LL-2,6-diaminopimelate from (S)-tetrahydrodipicolinate (succinylase route): step 1/3. Its function is as follows. Catalyzes the conversion of the cyclic tetrahydrodipicolinate (THDP) into the acyclic N-succinyl-L-2-amino-6-oxopimelate using succinyl-CoA. The chain is 2,3,4,5-tetrahydropyridine-2,6-dicarboxylate N-succinyltransferase from Rothia mucilaginosa (strain DY-18) (Stomatococcus mucilaginosus).